A 577-amino-acid chain; its full sequence is Methionine--tRNA ligase (577 aa).

Positions 21 to 31 (PYANGPLHVGH) match the 'HIGH' region motif. Positions 153, 156, 166, and 169 each coordinate Zn(2+). Residues 355–359 (QMSTS) carry the 'KMSKS' region motif. ATP is bound at residue T358.

The protein belongs to the class-I aminoacyl-tRNA synthetase family. MetG type 1 subfamily. As to quaternary structure, monomer. It depends on Zn(2+) as a cofactor.

It localises to the cytoplasm. The catalysed reaction is tRNA(Met) + L-methionine + ATP = L-methionyl-tRNA(Met) + AMP + diphosphate. Its function is as follows. Is required not only for elongation of protein synthesis but also for the initiation of all mRNA translation through initiator tRNA(fMet) aminoacylation. This Rubrobacter xylanophilus (strain DSM 9941 / JCM 11954 / NBRC 16129 / PRD-1) protein is Methionine--tRNA ligase.